The sequence spans 87 residues: Acyl-CoA-binding protein (87 aa).

Residue Ser-2 is modified to N-acetylserine. The 86-residue stretch at 2 to 87 folds into the ACB domain; sequence SQADFDKAAE…VEELKKKYGI (86 aa). Lys-8 bears the N6-acetyllysine; alternate mark. At Lys-8 the chain carries N6-succinyllysine; alternate. Lys-14 serves as a coordination point for an acyl-CoA. The residue at position 17 (Lys-17) is an N6-succinyllysine. At Tyr-29 the chain carries Phosphotyrosine. An acyl-CoA is bound by residues 29 to 33, Lys-51, Lys-55, and Tyr-74; that span reads YSHFK. Lys-51 is modified (N6-acetyllysine). Lys-55 is subject to N6-acetyllysine; alternate. The residue at position 55 (Lys-55) is an N6-succinyllysine; alternate. An N6-(2-hydroxyisobutyryl)lysine; alternate modification is found at Lys-55. Lys-55 is subject to N6-malonyllysine; alternate. Lys-77 is subject to N6-acetyllysine; alternate. Position 77 is an N6-succinyllysine; alternate (Lys-77).

The protein belongs to the ACBP family. As to quaternary structure, monomer.

It is found in the endoplasmic reticulum. The protein resides in the golgi apparatus. In terms of biological role, binds medium- and long-chain acyl-CoA esters with very high affinity and may function as an intracellular carrier of acyl-CoA esters. It is also able to displace diazepam from the benzodiazepine (BZD) recognition site located on the GABA type A receptor. It is therefore possible that this protein also acts as a neuropeptide to modulate the action of the GABA receptor. This Rattus norvegicus (Rat) protein is Acyl-CoA-binding protein (Dbi).